A 405-amino-acid polypeptide reads, in one-letter code: Imidazolonepropionase (405 aa).

Fe(3+) contacts are provided by histidine 73 and histidine 75. Positions 73 and 75 each coordinate Zn(2+). Positions 82, 145, and 178 each coordinate 4-imidazolone-5-propanoate. N-formimidoyl-L-glutamate is bound at residue tyrosine 145. Position 243 (histidine 243) interacts with Fe(3+). Histidine 243 is a Zn(2+) binding site. Glutamine 246 contacts 4-imidazolone-5-propanoate. A Fe(3+)-binding site is contributed by aspartate 318. A Zn(2+)-binding site is contributed by aspartate 318. N-formimidoyl-L-glutamate-binding residues include asparagine 320 and glycine 322. A 4-imidazolone-5-propanoate-binding site is contributed by threonine 323.

It belongs to the metallo-dependent hydrolases superfamily. HutI family. Requires Zn(2+) as cofactor. The cofactor is Fe(3+).

It is found in the cytoplasm. It catalyses the reaction 4-imidazolone-5-propanoate + H2O = N-formimidoyl-L-glutamate. Its pathway is amino-acid degradation; L-histidine degradation into L-glutamate; N-formimidoyl-L-glutamate from L-histidine: step 3/3. Its function is as follows. Catalyzes the hydrolytic cleavage of the carbon-nitrogen bond in imidazolone-5-propanoate to yield N-formimidoyl-L-glutamate. It is the third step in the universal histidine degradation pathway. In Brucella anthropi (strain ATCC 49188 / DSM 6882 / CCUG 24695 / JCM 21032 / LMG 3331 / NBRC 15819 / NCTC 12168 / Alc 37) (Ochrobactrum anthropi), this protein is Imidazolonepropionase.